The sequence spans 393 residues: MYLIGEALVGDGAELAHIDLIMGNKEGAVGQAFANSISQLSKGHTPLLAVVRPNLPTKPSTLIIPKVTLKKEYQVNQMFGPVQAAVAKAVADSIEEGVFEGVDIEDTVIMASVFVHPTAQDYNKIYRFNYGAMKLALRRALDRFPDVETLLHEKDRAAHAVMGFKVQRLWDPPYLQVAMDLVDRNHMNRVLDELPQNDHLIIEAGTPLIKKFGLSIISEIRERRPNAFIVADLKTLDTGNLEARMTADAGADAVVISGLAPISTIEKAIEDTRKTGIYTVIDMLNVKDPVAVVKQLKVKPDVVELHRGIDVEDTAYAWGDIPAIKKAGGERLLVATAGGIRQGVVKDARKAGADILVVGRAITASKNIQHAAEEFLEELSTEEIDQFRIMTDF.

A formaldehyde-activating enzyme region spans residues 1–161 (MYLIGEALVG…HEKDRAAHAV (161 aa)). Catalysis depends on His-17, which acts as the Proton donor. Residues Asp-19, Leu-48, Lys-66, Thr-68, and Gln-83 each coordinate substrate. The 3-hexulose-6-phosphate synthase stretch occupies residues 162–393 (MGFKVQRLWD…IDQFRIMTDF (232 aa)).

This sequence in the N-terminal section; belongs to the formaldehyde-activating enzyme family. It in the C-terminal section; belongs to the HPS/KGPDC family. HPS subfamily.

It catalyses the reaction 5,6,7,8-tetrahydromethanopterin + formaldehyde = 5,10-methylenetetrahydromethanopterin + H2O. The enzyme catalyses D-ribulose 5-phosphate + formaldehyde = D-arabino-hex-3-ulose 6-phosphate. It functions in the pathway carbohydrate biosynthesis; D-ribose 5-phosphate biosynthesis. Its function is as follows. Catalyzes the condensation of formaldehyde with tetrahydromethanopterin (H(4)MPT) to 5,10-methylenetetrahydromethanopterin. Functionally, catalyzes the reversible formation of ribulose-5-phosphate and formaldehyde from 3-hexulose-6-phosphate. This is Bifunctional enzyme Fae/Hps from Methanoculleus marisnigri (strain ATCC 35101 / DSM 1498 / JR1).